A 655-amino-acid polypeptide reads, in one-letter code: Fructose-1,6-bisphosphatase class 3 (655 aa).

The protein belongs to the FBPase class 3 family. Mn(2+) is required as a cofactor.

The catalysed reaction is beta-D-fructose 1,6-bisphosphate + H2O = beta-D-fructose 6-phosphate + phosphate. Its pathway is carbohydrate biosynthesis; gluconeogenesis. This chain is Fructose-1,6-bisphosphatase class 3, found in Porphyromonas gingivalis (strain ATCC 33277 / DSM 20709 / CIP 103683 / JCM 12257 / NCTC 11834 / 2561).